We begin with the raw amino-acid sequence, 212 residues long: Thymidine kinase (212 aa).

Residues 16-23 (GPMFSGKS) and 99-102 (DEAQ) contribute to the ATP site. Glutamate 100 (proton acceptor) is an active-site residue.

It belongs to the thymidine kinase family. Homotetramer.

Its subcellular location is the cytoplasm. It carries out the reaction thymidine + ATP = dTMP + ADP + H(+). This chain is Thymidine kinase, found in Deinococcus radiodurans (strain ATCC 13939 / DSM 20539 / JCM 16871 / CCUG 27074 / LMG 4051 / NBRC 15346 / NCIMB 9279 / VKM B-1422 / R1).